Consider the following 131-residue polypeptide: Hypocretin neuropeptide precursor (131 aa).

The first 33 residues, Met-1–Ala-33, serve as a signal peptide directing secretion. Gln-34 is subject to Pyrrolidone carboxylic acid. Disulfide bonds link Cys-39/Cys-45 and Cys-40/Cys-47. Position 66 is a leucine amide (Leu-66). Position 97 is a methionine amide (Met-97). Positions Gly-98–Ile-131 are cleaved as a propeptide — removed in mature form.

This sequence belongs to the orexin family. Post-translationally, specific enzymatic cleavages at paired basic residues yield the different active peptides. In terms of tissue distribution, abundantly expressed in subthalamic nucleus but undetectable in other brain regions tested (hypothalamus was not tested) and in heart, placenta, lung, liver, skeletal muscle, kidney and pancreas.

The protein resides in the rough endoplasmic reticulum. It localises to the cytoplasmic vesicle. It is found in the synapse. In terms of biological role, neuropeptides that play a significant role in the regulation of food intake and sleep-wakefulness, possibly by coordinating the complex behavioral and physiologic responses of these complementary homeostatic functions. A broader role in the homeostatic regulation of energy metabolism, autonomic function, hormonal balance and the regulation of body fluids, is also suggested. Functionally, binds to orexin receptors HCRTR1/OX1R and HCRTR2/OX2R with a high affinity. Stimulates food intake. Modulates pituitary luteinizing hormone secretion in an ovarian steroid-dependent manner. Binds to orexin receptor HCRTR2/OX2R only. Stimulates food intake. Modulates pituitary luteinizing hormone secretion in an ovarian steroid-dependent manner. The sequence is that of Hypocretin neuropeptide precursor from Homo sapiens (Human).